Consider the following 609-residue polypeptide: MESRTSRRTFVKGLAAAGVLGGLGLWRSPSWAASGSPALSVLSGTEFDLSIGEMPVNITGRRRTAMAINGGLPGPLLRWKEGDTVTLRVRNRLDAATSIHWHGIILPPNMDGVPGLSFAGIEPGGVYVYQFKVQQNGTYWYHSHSGFQEQVGVYGPLVIEAKEPEPFKYDSEHVVMLTDWTDEDPVSLMRTLKKQSDYYNFHKRTVGDFVNDVADKGWAATVADRKMWAEMKMNPTDLADVSGATYTYLLNGQAPNMNWTGLFRPGEKLRLRFINGSAMTYFDIRIPGLKMTVVASDGQFVNPVEVDELRIAVAETFDVIVEPTAEAYTVFAQSMDRTGYARGTLAVREGLVAQVPPLDPRPLVTMDDMGMGGMDHGSMDGMSGMDSGADDGMQTMSSMGGDSMPAMDHSKMSTMQGMDHGAMSGMDHGAMGGMVMQSHPASENDNPLVDMQAMSPTAKLNDPGLGLRNNGRKVLTYADLKSTFEDPDGREPSRTIELHLTGHMEKFAWSFDGIKFADAQPLILKYGERVRIVLVNDTMMTHPIHLHGMWSDLEDEDGNFRVRKHTIDMPPGSKRSYRVTADALGRWAYHCHLLYHMEMGMFREVRVEE.

The tat-type signal signal peptide spans 1 to 32 (MESRTSRRTFVKGLAAAGVLGGLGLWRSPSWA). The Cu cation site is built by H100, H102, H142, and H144. 5 consecutive repeat copies span residues 367–374 (DDMGMGGM), 375–382 (DHGSMDGM), 408–415 (DHSKMSTM), 419–426 (DHGAMSGM), and 427–434 (DHGAMGGM). Residues 367–434 (DDMGMGGMDH…GMDHGAMGGM (68 aa)) form a 5 X 8 AA tandem repeats of D-H-X-X-M-X-G-M region. Residues H542, H545, H547, H590, C591, H592, H596, and M601 each coordinate Cu cation.

This sequence belongs to the multicopper oxidase family. CopA subfamily. In terms of processing, predicted to be exported by the Tat system. The position of the signal peptide cleavage has been experimentally proven.

The protein localises to the periplasm. Its function is as follows. Mediates copper resistance by sequestration of copper in the periplasm along with the copper-binding protein CopC. May have oxidase activity. This is Copper resistance protein A (copA) from Pseudomonas syringae pv. tomato.